The chain runs to 584 residues: POTE ankyrin domain family member D (584 aa).

ANK repeat units lie at residues 172 to 201 (EKRT…QLNV), 205 to 234 (KKRT…DRNI), 238 to 267 (YGNT…DIES), 271 to 300 (CGLT…NLNV), 304 to 333 (YGRT…DVSS), and 337 to 366 (SGQT…KQML). The tract at residues 369-502 (SSENSNPEQD…ILTNKQKQIE (134 aa)) is disordered. Basic and acidic residues-rich tracts occupy residues 377 to 392 (QDLK…RLKV), 401 to 412 (MSQEPEINKDCD), and 466 to 481 (EEYH…KQLS). The segment covering 482-498 (EEQNTGISQDEILTNKQ) has biased composition (polar residues). Positions 494 to 583 (LTNKQKQIEV…LNEEALTKTN (90 aa)) form a coiled coil.

The protein belongs to the POTE family. Expressed in prostate, ovary, testis, placenta and prostate cancer cell lines. Localizes to basal and terminal prostate epithelial cells.

Its subcellular location is the cell membrane. This Homo sapiens (Human) protein is POTE ankyrin domain family member D (POTED).